Reading from the N-terminus, the 968-residue chain is Translation initiation factor IF-2 (968 aa).

The segment covering 305 to 319 (KPAAAAGAPGAPGAA) has biased composition (low complexity). Residues 305–376 (KPAAAAGAPG…NDRDARPEST (72 aa)) are disordered. One can recognise a tr-type G domain in the interval 468 to 635 (PRAPVVTVMG…QVLLQAEVLE (168 aa)). Residues 477–484 (GHVDHGKT) form a G1 region. Position 477–484 (477–484 (GHVDHGKT)) interacts with GTP. Residues 502 to 506 (GITQH) form a G2 region. The G3 stretch occupies residues 523 to 526 (DTPG). GTP contacts are provided by residues 523 to 527 (DTPGH) and 577 to 580 (NKID). The G4 stretch occupies residues 577-580 (NKID). Residues 613 to 615 (SAR) form a G5 region.

The protein belongs to the TRAFAC class translation factor GTPase superfamily. Classic translation factor GTPase family. IF-2 subfamily.

The protein localises to the cytoplasm. In terms of biological role, one of the essential components for the initiation of protein synthesis. Protects formylmethionyl-tRNA from spontaneous hydrolysis and promotes its binding to the 30S ribosomal subunits. Also involved in the hydrolysis of GTP during the formation of the 70S ribosomal complex. The sequence is that of Translation initiation factor IF-2 from Polaromonas sp. (strain JS666 / ATCC BAA-500).